The primary structure comprises 313 residues: Malate dehydrogenase (313 aa).

Residues glycine 11–glycine 16 and aspartate 35 each bind NAD(+). Substrate-binding residues include arginine 84 and arginine 90. NAD(+)-binding positions include asparagine 97 and valine 120 to asparagine 122. Asparagine 122 and arginine 153 together coordinate substrate. Histidine 177 acts as the Proton acceptor in catalysis.

This sequence belongs to the LDH/MDH superfamily. MDH type 3 family.

It catalyses the reaction (S)-malate + NAD(+) = oxaloacetate + NADH + H(+). Catalyzes the reversible oxidation of malate to oxaloacetate. The protein is Malate dehydrogenase of Ehrlichia ruminantium (strain Welgevonden).